The primary structure comprises 156 residues: Small ribosomal subunit protein bS6 (156 aa).

The tract at residues 98 to 156 (GHDFRDQRSHHGQAGEFRKREPQQKSKEQSEFSKEKKSFSKSVTKKTVVSKPKETKEEK) is disordered. Positions 113–135 (EFRKREPQQKSKEQSEFSKEKKS) are enriched in basic and acidic residues. The segment covering 137–147 (SKSVTKKTVVS) has biased composition (low complexity).

The protein belongs to the bacterial ribosomal protein bS6 family.

Functionally, binds together with bS18 to 16S ribosomal RNA. The sequence is that of Small ribosomal subunit protein bS6 from Mycoplasmopsis synoviae (strain 53) (Mycoplasma synoviae).